The sequence spans 363 residues: Putative glutamate--cysteine ligase 2-3 (363 aa).

The protein belongs to the glutamate--cysteine ligase type 2 family. YbdK subfamily.

The enzyme catalyses L-cysteine + L-glutamate + ATP = gamma-L-glutamyl-L-cysteine + ADP + phosphate + H(+). In terms of biological role, ATP-dependent carboxylate-amine ligase which exhibits weak glutamate--cysteine ligase activity. The chain is Putative glutamate--cysteine ligase 2-3 from Rubrobacter xylanophilus (strain DSM 9941 / JCM 11954 / NBRC 16129 / PRD-1).